Consider the following 128-residue polypeptide: MIFGIGLDLVELEQIRQTLERQPRIVKRVLTAEEQNRFYTLSDKRQLEYLAGRFAAKEAFVKAFGTGIGADVSWLDLEVLNEASGRPVMTGPFEGTIHLSITHSDHYAAAQVLLEKRSSDVSTNLDRN.

Mg(2+) contacts are provided by Asp-8 and Glu-58.

Belongs to the P-Pant transferase superfamily. AcpS family. Mg(2+) is required as a cofactor.

The protein localises to the cytoplasm. It catalyses the reaction apo-[ACP] + CoA = holo-[ACP] + adenosine 3',5'-bisphosphate + H(+). Its function is as follows. Transfers the 4'-phosphopantetheine moiety from coenzyme A to a Ser of acyl-carrier-protein. The chain is Holo-[acyl-carrier-protein] synthase from Exiguobacterium sibiricum (strain DSM 17290 / CCUG 55495 / CIP 109462 / JCM 13490 / 255-15).